Consider the following 360-residue polypeptide: MIEDTMTLLSLLGRIMRYFLLRPETLFLLCISLALWSYFFHTDEVKTIVKSSRDAVKMVKGKVAEIMQNDRLGGLDVLEAEFSKTWEFKNHNVAVYSIQGRRDHMEDRFEVLTDLANKTHPSIFGIFDGHGGETAAEYVKSRLPEALKQHLQDYEKDKENSVLSYQTILEQQILSIDREMLEKLTVSYDEAGTTCLIALLSDKDLTVANVGDSRGVLCDKDGNAIPLSHDHKPYQLKERKRIKRAGGFISFNGSWRVQGILAMSRSLGDYPLKNLNVVIPDPDILTFDLDKLQPEFMILASDGLWDAFSNEEAVRFIKERLDEPHFGAKSIVLQSFYRGCPDNITVMVVKFRNSSKTEEQ.

The Extracellular segment spans residues 1–25; the sequence is MIEDTMTLLSLLGRIMRYFLLRPET. A helical transmembrane segment spans residues 26-42; sequence LFLLCISLALWSYFFHT. Over 43-360 the chain is Cytoplasmic; it reads DEVKTIVKSS…FRNSSKTEEQ (318 aa). The PPM-type phosphatase domain occupies 92-351; the sequence is NVAVYSIQGR…DNITVMVVKF (260 aa). Mn(2+)-binding residues include Asp128, Gly129, Asp302, and Asp342.

Belongs to the PP2C family. In terms of assembly, interacts with MAP3K7/TAK1. Interacts with MAP3K5. It depends on Mg(2+) as a cofactor. The cofactor is Mn(2+). As to expression, ubiquitous. Highly expressed in heart, placenta, lung, liver, kidney and pancreas.

The protein localises to the membrane. The catalysed reaction is O-phospho-L-seryl-[protein] + H2O = L-seryl-[protein] + phosphate. The enzyme catalyses O-phospho-L-threonyl-[protein] + H2O = L-threonyl-[protein] + phosphate. Acts as a suppressor of the SAPK signaling pathways by associating with and dephosphorylating MAP3K7/TAK1 and MAP3K5, and by attenuating the association between MAP3K7/TAK1 and MAP2K4 or MAP2K6. In Homo sapiens (Human), this protein is Protein phosphatase 1L (PPM1L).